The following is a 230-amino-acid chain: 5'-methylthioadenosine/S-adenosylhomocysteine nucleosidase (230 aa).

The active-site Proton acceptor is the Glu12. Residues Gly78, Ile153, and 174–175 each bind substrate; that span reads ME. Residue Asp198 is the Proton donor of the active site.

The protein belongs to the PNP/UDP phosphorylase family. MtnN subfamily.

The catalysed reaction is S-adenosyl-L-homocysteine + H2O = S-(5-deoxy-D-ribos-5-yl)-L-homocysteine + adenine. The enzyme catalyses S-methyl-5'-thioadenosine + H2O = 5-(methylsulfanyl)-D-ribose + adenine. It carries out the reaction 5'-deoxyadenosine + H2O = 5-deoxy-D-ribose + adenine. It participates in amino-acid biosynthesis; L-methionine biosynthesis via salvage pathway; S-methyl-5-thio-alpha-D-ribose 1-phosphate from S-methyl-5'-thioadenosine (hydrolase route): step 1/2. Catalyzes the irreversible cleavage of the glycosidic bond in both 5'-methylthioadenosine (MTA) and S-adenosylhomocysteine (SAH/AdoHcy) to adenine and the corresponding thioribose, 5'-methylthioribose and S-ribosylhomocysteine, respectively. Also cleaves 5'-deoxyadenosine, a toxic by-product of radical S-adenosylmethionine (SAM) enzymes, into 5-deoxyribose and adenine. The protein is 5'-methylthioadenosine/S-adenosylhomocysteine nucleosidase of Shewanella piezotolerans (strain WP3 / JCM 13877).